A 437-amino-acid polypeptide reads, in one-letter code: 3-phosphoshikimate 1-carboxyvinyltransferase (437 aa).

Residues Lys-21, Ser-22, and Arg-26 each coordinate 3-phosphoshikimate. Lys-21 contacts phosphoenolpyruvate. Phosphoenolpyruvate-binding residues include Gly-101 and Arg-129. 3-phosphoshikimate contacts are provided by Ser-172, Ser-173, Gln-174, Ser-200, Asp-314, and Lys-341. Gln-174 lines the phosphoenolpyruvate pocket. Asp-314 serves as the catalytic Proton acceptor. Positions 345, 388, and 414 each coordinate phosphoenolpyruvate.

Belongs to the EPSP synthase family. As to quaternary structure, monomer.

It localises to the cytoplasm. It carries out the reaction 3-phosphoshikimate + phosphoenolpyruvate = 5-O-(1-carboxyvinyl)-3-phosphoshikimate + phosphate. It participates in metabolic intermediate biosynthesis; chorismate biosynthesis; chorismate from D-erythrose 4-phosphate and phosphoenolpyruvate: step 6/7. Catalyzes the transfer of the enolpyruvyl moiety of phosphoenolpyruvate (PEP) to the 5-hydroxyl of shikimate-3-phosphate (S3P) to produce enolpyruvyl shikimate-3-phosphate and inorganic phosphate. The polypeptide is 3-phosphoshikimate 1-carboxyvinyltransferase (Clostridioides difficile (strain 630) (Peptoclostridium difficile)).